Consider the following 320-residue polypeptide: GPI-specific phospholipase A2-like PGAP3 (320 aa).

The signal sequence occupies residues 1–23 (MAKRTAPLLLLTLAVGLAGGSQG). Residues 24-98 (DREPVYRDCV…QFHGKWPFSR (75 aa)) lie on the Lumenal side of the membrane. N-linked (GlcNAc...) asparagine glycosylation is present at Asn40. The chain crosses the membrane as a helical span at residues 99–119 (FLFIQEPASAVASLLNGLASL). At 120 to 135 (VMLCRYRASVPASSPM) the chain is on the cytoplasmic side. The helical transmembrane segment at 136–156 (YHTCMAFAWVSLNAWFWSTVF) threads the bilayer. At 157-169 (HTRDTDLTEKMDY) the chain is on the lumenal side. The helical transmembrane segment at 170–190 (FCASAVILHSVYLCCVRTVGL) threads the bilayer. Residues 191–198 (QHPSVASA) lie on the Cytoplasmic side of the membrane. The helical transmembrane segment at 199 to 219 (FGALLLLLLTGHISYLSLVHF) threads the bilayer. The Lumenal segment spans residues 220–223 (DYGY). The helical transmembrane segment at 224–244 (NMMANVAIGLVNLAWWLVWCL) threads the bilayer. The Cytoplasmic portion of the chain corresponds to 245–257 (RNRQRLPHTRRCM). A helical membrane pass occupies residues 258 to 278 (VVVVLLQGLSLLELLDFPPLF). Trp279 is a topological domain (lumenal). Residues 280 to 299 (VLDAHAIWHISTIPVHTLFF) form a helical membrane-spanning segment. The Cytoplasmic segment spans residues 300–320 (RFLEDDSLYLLKESGAMFKLD).

Belongs to the PGAP3 family.

It is found in the golgi apparatus membrane. In terms of biological role, involved in the fatty acid remodeling steps of GPI-anchor maturation where the unsaturated acyl chain at sn-2 of inositol phosphate is replaced by a saturated stearoyl chain. May catalyze the first step of the fatty acid remodeling, by removing the unsaturated acyl chain at sn-2 of inositol phosphate, generating a lyso-GPI intermediate. The fatty acid remodeling steps is critical for the integration of GPI-APs into lipid rafts. The chain is GPI-specific phospholipase A2-like PGAP3 from Mus musculus (Mouse).